We begin with the raw amino-acid sequence, 946 residues long: Probable inactive ATP-dependent zinc metalloprotease FTSHI 1, chloroplastic (946 aa).

A chloroplast-targeting transit peptide spans 1–54 (MASIDNVFSLGTRFSIPENPKRSILKHATTSSFSARTQTRWRAPILRRSFTVLC). Helical transmembrane passes span 289–309 (AVIAAAAVVVGGFLASAVFAV), 320–340 (VVWPIAKPFLKLFVGVFLGVL), and 369–389 (VASSLEMLKPILLVVMTMVLL). Residue 470-477 (GPPGCGKT) participates in ATP binding.

The protein in the N-terminal section; belongs to the AAA ATPase family. In the C-terminal section; belongs to the peptidase M41 family. In terms of assembly, oligomer.

It localises to the plastid. It is found in the chloroplast inner membrane. In terms of biological role, functions in chloroplast biogenesis and chloroplast division. Required for plastid development during embryogenesis. Might be involved in chaperone functions or play a structural role in the thylakoid FtsH complex. This is Probable inactive ATP-dependent zinc metalloprotease FTSHI 1, chloroplastic from Arabidopsis thaliana (Mouse-ear cress).